A 101-amino-acid chain; its full sequence is MFVKKGDKVRVIAGKDKGVEALVVTALPKVNKVVVEGVNIVKKHQKPNNEHPQGAIVEKEAPIHVSNVQVLDKNGVAGRVGYKFVDGKKVRYNKKSGEVLD.

Belongs to the universal ribosomal protein uL24 family. As to quaternary structure, part of the 50S ribosomal subunit.

In terms of biological role, one of two assembly initiator proteins, it binds directly to the 5'-end of the 23S rRNA, where it nucleates assembly of the 50S subunit. Its function is as follows. One of the proteins that surrounds the polypeptide exit tunnel on the outside of the subunit. The protein is Large ribosomal subunit protein uL24 of Streptococcus gordonii (strain Challis / ATCC 35105 / BCRC 15272 / CH1 / DL1 / V288).